The primary structure comprises 303 residues: tRNA dimethylallyltransferase (303 aa).

Residue 11–18 coordinates ATP; that stretch reads GPTGVGKS. 13-18 is a binding site for substrate; it reads TGVGKS. Interaction with substrate tRNA regions lie at residues 36 to 39 and 159 to 163; these read DSRQ and QRVLR.

It belongs to the IPP transferase family. Monomer. Mg(2+) is required as a cofactor.

It catalyses the reaction adenosine(37) in tRNA + dimethylallyl diphosphate = N(6)-dimethylallyladenosine(37) in tRNA + diphosphate. Functionally, catalyzes the transfer of a dimethylallyl group onto the adenine at position 37 in tRNAs that read codons beginning with uridine, leading to the formation of N6-(dimethylallyl)adenosine (i(6)A). This chain is tRNA dimethylallyltransferase, found in Lawsonia intracellularis (strain PHE/MN1-00).